The chain runs to 130 residues: Protein ApaG (130 aa).

Residues Ser3–Arg127 enclose the ApaG domain.

The chain is Protein ApaG from Brucella abortus (strain S19).